Reading from the N-terminus, the 194-residue chain is UPF0232 protein in recF-gyrB intergenic region (194 aa).

Over residues 1-14 the composition is skewed to acidic residues; sequence MTGPFDDDGPEEDA. The segment at 1 to 81 is disordered; that stretch reads MTGPFDDDGP…GPGPDARDPQ (81 aa). Over residues 30-52 the composition is skewed to basic and acidic residues; it reads DLVRRTLEEARGAARSQGKDVGR.

This sequence belongs to the UPF0232 family.

This is UPF0232 protein in recF-gyrB intergenic region from Mycolicibacterium smegmatis (Mycobacterium smegmatis).